The sequence spans 278 residues: MNIENTLLKQDVWRFIDNTTINPAFDAIQSFATDDTLCRSVGARMAPSTVRGWVHEKTVSLGIQDSKLPDIDKGIAFLQKQGYRVVVRNSGGLAVVLDSGVLNLSMVLPDAERGIAIERGYETMFTLIKDMFVDCNEVIEAKEIEDSYCPGSYDLSIQGKKFAGISQRRMAKGVAVQIYLAIDGDQTTRSELIRDFYTISGKAKQTKYTFPDVNPNVMGSLSDLMKNDISLNGTLVRLFNSLRHYAGDLVSGTLTSEELDLFPAYYERLIARNDKVLT.

In terms of domain architecture, BPL/LPL catalytic spans 44–250 (RMAPSTVRGW…SLRHYAGDLV (207 aa)). Catalysis depends on Cys149, which acts as the Acyl-thioester intermediate.

It belongs to the octanoyltransferase LipL family.

The enzyme catalyses N(6)-[(R)-lipoyl]-L-lysyl-[glycine-cleavage complex H protein] + L-lysyl-[lipoyl-carrier protein] = L-lysyl-[glycine-cleavage complex H protein] + N(6)-[(R)-lipoyl]-L-lysyl-[lipoyl-carrier protein]. It functions in the pathway protein modification; protein lipoylation via exogenous pathway. Its function is as follows. Catalyzes the amidotransfer (transamidation) of the lipoyl moiety from lipoyl-GcvH to the lipoyl domain of the E2 subunit of lipoate-dependent enzymes. Takes part in a pathway for scavenging of lipoic acid derived from eukaryotic host cells. Cannot use lipoyl-tripeptide (DK(L)A), lipoamide (LD), or free lipoate as substrate. This is Lipoyl-[GcvH]:protein N-lipoyltransferase from Listeria monocytogenes serovar 1/2a (strain ATCC BAA-679 / EGD-e).